A 326-amino-acid polypeptide reads, in one-letter code: Protein phosphatase PTC7 homolog fig (326 aa).

Positions 40–83 are disordered; that stretch reads VQGKSKPRSPHLTSPQCSPEHRPRRFRPPSASGRTAFSSAPRPK. The PPM-type phosphatase domain occupies 64–314; that stretch reads RFRPPSASGR…DDITVVLASV (251 aa). 3 residues coordinate Mn(2+): aspartate 91, glycine 92, and aspartate 236.

Belongs to the PP2C family. The cofactor is Mg(2+). It depends on Mn(2+) as a cofactor.

The enzyme catalyses O-phospho-L-seryl-[protein] + H2O = L-seryl-[protein] + phosphate. The catalysed reaction is O-phospho-L-threonyl-[protein] + H2O = L-threonyl-[protein] + phosphate. This chain is Protein phosphatase PTC7 homolog fig, found in Drosophila persimilis (Fruit fly).